The following is a 345-amino-acid chain: Protein D345L (345 aa).

Belongs to the asfivirus D345L family. As to quaternary structure, interacts with IKKA/CHUK and IKBKB.

It is found in the host cytoplasm. In terms of biological role, plays a role in the negative regulation of host NF-kappa-B signaling pathway. Mechanistically, recruits IKKA/CHUK and IKBKB to suppress their kinase activity towards NFKBIA. The polypeptide is Protein D345L (Ornithodoros (relapsing fever ticks)).